A 441-amino-acid chain; its full sequence is Serine/threonine-protein phosphatase 2A activator 1 (441 aa).

Polar residues-rich tracts occupy residues 66 to 75 and 421 to 432; these read NIPPSNTTHS and QRQDDLNSTTYR. Disordered regions lie at residues 66–100 and 421–441; these read NIPP…SSNQ and QRQD…LGRN.

It belongs to the PTPA-type PPIase family.

The protein localises to the cytoplasm. It is found in the nucleus. It carries out the reaction [protein]-peptidylproline (omega=180) = [protein]-peptidylproline (omega=0). Functionally, PPIases accelerate the folding of proteins. It catalyzes the cis-trans isomerization of proline imidic peptide bonds in oligopeptides. Acts as a regulatory subunit for PP2A-like phosphatases modulating their activity or substrate specificity, probably by inducing a conformational change in the catalytic subunit, a direct target of the PPIase. Can reactivate inactive phosphatase PP2A-phosphatase methylesterase complexes (PP2Ai) in presence of ATP and Mg(2+) by dissociating the inactive form from the complex. The chain is Serine/threonine-protein phosphatase 2A activator 1 (RRD1) from Debaryomyces hansenii (strain ATCC 36239 / CBS 767 / BCRC 21394 / JCM 1990 / NBRC 0083 / IGC 2968) (Yeast).